Reading from the N-terminus, the 190-residue chain is Nucleoside triphosphate pyrophosphatase (190 aa).

Residue Asp-69 is the Proton acceptor of the active site.

Belongs to the Maf family. Requires a divalent metal cation as cofactor.

It is found in the cytoplasm. The enzyme catalyses a ribonucleoside 5'-triphosphate + H2O = a ribonucleoside 5'-phosphate + diphosphate + H(+). It carries out the reaction a 2'-deoxyribonucleoside 5'-triphosphate + H2O = a 2'-deoxyribonucleoside 5'-phosphate + diphosphate + H(+). Its function is as follows. Nucleoside triphosphate pyrophosphatase. May have a dual role in cell division arrest and in preventing the incorporation of modified nucleotides into cellular nucleic acids. The polypeptide is Nucleoside triphosphate pyrophosphatase (Helicobacter pylori (strain HPAG1)).